Here is a 151-residue protein sequence, read N- to C-terminus: 18 kDa heat shock protein (151 aa).

The sHSP domain maps to 38–151 (TFNGNAGFKV…KDNGRRIDIH (114 aa)).

The protein belongs to the small heat shock protein (HSP20) family.

Probable chaperone. The protein is 18 kDa heat shock protein (hsp18) of Clostridium acetobutylicum (strain ATCC 824 / DSM 792 / JCM 1419 / IAM 19013 / LMG 5710 / NBRC 13948 / NRRL B-527 / VKM B-1787 / 2291 / W).